Consider the following 951-residue polypeptide: Leucine-rich repeat-containing G-protein coupled receptor 4 (951 aa).

Positions 1–24 are cleaved as a signal peptide; it reads MPGPLRLLCFFALGLLGSAGPSGA. The region spanning 25–57 is the LRRNT domain; it reads APPLCAAPCSCDGDRRVDCSGKGLTAVPEGLSA. Residues 25–544 are Extracellular-facing; that stretch reads APPLCAAPCS…LLGSWMIRLT (520 aa). Cystine bridges form between Cys29-Cys35 and Cys33-Cys43. 15 LRR repeats span residues 58–79, 82–103, 106–127, 130–151, 154–177, 178–199, 202–223, 226–247, 249–270, 273–294, 320–341, 344–365, 366–387, 390–411, and 414–435; these read FTQALDISMNNITQLPEDAFKN, FLEELQLAGNDLSFIHPKALSG, ELKVLTLQNNQLKTVPSEAIRG, ALQSLRLDANHITSVPEDSFEG, QLRHLWLDDNILTEVPVRPLSNLP, TLQALTLALNNISSIPDFAFTN, SLVVLHLHNNKIKSLSQHCFDG, NLETLDLNYNNLDEFPQAIKAL, SLKELGFHSNSISVIPDGAFAG, LLRTIHLYDNPLSFVGNSAFHN, HLESLTLTGTKISSIPDDLCQN, MLRTLDLSYNDIRDLPSFNGCR, ALEEISLQRNQISLIKETTFQG, SLRILDLSRNLIREIHSGAFAK, and TITNLDVSFNELTSFPTEGLNG. Residue Asn68 is glycosylated (N-linked (GlcNAc...) asparagine). N-linked (GlcNAc...) asparagine glycosylation is found at Asn188 and Asn199. The N-linked (GlcNAc...) asparagine glycan is linked to Asn294. A disulfide bond links Cys339 and Cys364. Intrachain disulfides connect Cys470–Cys522 and Cys471–Cys476. The interval 487 to 512 is disordered; that stretch reads NSPQDHSVTKEKGATDAANATSTAES. Over residues 501–510 the composition is skewed to low complexity; sequence TDAANATSTA. The N-linked (GlcNAc...) asparagine glycan is linked to Asn505. The helical transmembrane segment at 545–565 threads the bilayer; that stretch reads VWFIFLVALLFNLLVILTVFA. Residues 566 to 575 lie on the Cytoplasmic side of the membrane; sequence SCSSLPASKL. Residues 576 to 596 form a helical membrane-spanning segment; the sequence is FIGLISVSNLLMGIYTGILTF. At 597–619 the chain is on the extracellular side; that stretch reads LDAVSWGRFAEFGIWWETGSGCK. A disulfide bridge links Cys618 with Cys693. A helical transmembrane segment spans residues 620–640; the sequence is VAGSLAVFSSESAVFLLTLAA. Residues 641–661 are Cytoplasmic-facing; sequence VERSVFAKDVMKNGKSSHLRQ. Residues 662–682 form a helical membrane-spanning segment; the sequence is FQVAALVALLGAAIAGCFPLF. Topologically, residues 683-703 are extracellular; the sequence is HGGQYSASPLCLPFPTGETPS. Residues 704 to 724 form a helical membrane-spanning segment; the sequence is LGFTVTLVLLNSLAFLLMAII. Residues 725–756 are Cytoplasmic-facing; that stretch reads YTKLYCNLEKEDPSENSQSSMIKHVAWLIFTN. Residues 757–777 form a helical membrane-spanning segment; sequence CIFFCPVAFFSFAPLITAISI. The Extracellular portion of the chain corresponds to 778-783; sequence SPEIMK. Residues 784 to 804 form a helical membrane-spanning segment; sequence SVTLIFFPLPACLNPVLYVFF. Topologically, residues 805-951 are cytoplasmic; the sequence is NPKFKDDWKL…YAYNLPRVRD (147 aa). A Phosphoserine modification is found at Ser920.

This sequence belongs to the G-protein coupled receptor 1 family.

It localises to the cell membrane. Its function is as follows. Receptor for R-spondins that potentiates the canonical Wnt signaling pathway and is involved in the formation of various organs. Upon binding to R-spondins (RSPO1, RSPO2, RSPO3 or RSPO4), associates with phosphorylated LRP6 and frizzled receptors that are activated by extracellular Wnt receptors, triggering the canonical Wnt signaling pathway to increase expression of target genes. In contrast to classical G-protein coupled receptors, does not activate heterotrimeric G-proteins to transduce the signal. Its function as activator of the Wnt signaling pathway is required for the development of various organs, including liver, kidney, intestine, bone, reproductive tract and eye. May also act as a receptor for norrin (NDP), such results however require additional confirmation in vivo. Required during spermatogenesis to activate the Wnt signaling pathway in peritubular myoid cells. Required for the maintenance of intestinal stem cells and Paneth cell differentiation in postnatal intestinal crypts. Acts as a regulator of bone formation and remodeling. Involved in kidney development; required for maintaining the ureteric bud in an undifferentiated state. Involved in the development of the anterior segment of the eye. Required during erythropoiesis. Also acts as a negative regulator of innate immunity by inhibiting TLR2/TLR4 associated pattern-recognition and pro-inflammatory cytokine production. Plays an important role in regulating the circadian rhythms of plasma lipids, partially through regulating the rhythmic expression of MTTP. Required for proper development of GnRH neurons (gonadotropin-releasing hormone expressing neurons) that control the release of reproductive hormones from the pituitary gland. This chain is Leucine-rich repeat-containing G-protein coupled receptor 4 (Lgr4), found in Mus musculus (Mouse).